The sequence spans 507 residues: Ribose import ATP-binding protein RbsA 2 (507 aa).

ABC transporter domains are found at residues Phe-7 to Asn-245 and Leu-249 to Ser-498. Gly-39–Ser-46 is an ATP binding site.

The protein belongs to the ABC transporter superfamily. Ribose importer (TC 3.A.1.2.1) family. As to quaternary structure, the complex is composed of an ATP-binding protein (RbsA), two transmembrane proteins (RbsC) and a solute-binding protein (RbsB).

The protein resides in the cell inner membrane. The catalysed reaction is D-ribose(out) + ATP + H2O = D-ribose(in) + ADP + phosphate + H(+). Functionally, part of the ABC transporter complex RbsABC involved in ribose import. Responsible for energy coupling to the transport system. The chain is Ribose import ATP-binding protein RbsA 2 from Mesorhizobium japonicum (strain LMG 29417 / CECT 9101 / MAFF 303099) (Mesorhizobium loti (strain MAFF 303099)).